Consider the following 429-residue polypeptide: Gamma-glutamyl phosphate reductase (429 aa).

This sequence belongs to the gamma-glutamyl phosphate reductase family.

The protein resides in the cytoplasm. The catalysed reaction is L-glutamate 5-semialdehyde + phosphate + NADP(+) = L-glutamyl 5-phosphate + NADPH + H(+). The protein operates within amino-acid biosynthesis; L-proline biosynthesis; L-glutamate 5-semialdehyde from L-glutamate: step 2/2. Catalyzes the NADPH-dependent reduction of L-glutamate 5-phosphate into L-glutamate 5-semialdehyde and phosphate. The product spontaneously undergoes cyclization to form 1-pyrroline-5-carboxylate. This is Gamma-glutamyl phosphate reductase from Methylibium petroleiphilum (strain ATCC BAA-1232 / LMG 22953 / PM1).